The primary structure comprises 130 residues: Protein ApaG (130 aa).

Residues 3-127 (RAVTRNIEVQ…FSLDLPGTRR (125 aa)) form the ApaG domain.

This chain is Protein ApaG, found in Mesorhizobium japonicum (strain LMG 29417 / CECT 9101 / MAFF 303099) (Mesorhizobium loti (strain MAFF 303099)).